The sequence spans 285 residues: Hypersensitive-induced reaction 1 protein (285 aa).

The N-myristoyl glycine moiety is linked to residue Gly-2. Residues 118–190 (FEQKNEIAKS…EKILQIKRAE (73 aa)) are a coiled coil.

As to quaternary structure, homo- and heterodimer. Interacts with LRR1 (via LRR domain). In terms of tissue distribution, constitutively expressed in stems, roots and flowers, but not in leaves and fruits.

In terms of biological role, positive regulator of hypersensitive response (HR)-like cell death. May be involved in potassium ion channel regulation. The sequence is that of Hypersensitive-induced reaction 1 protein from Capsicum annuum (Capsicum pepper).